The chain runs to 520 residues: Cyclic AMP-responsive element-binding protein 3-like protein 2 (520 aa).

Residues 1–378 (MEVLESGEQG…CKLAGTQTGT (378 aa)) are Cytoplasmic-facing. Position 93 is a phosphoserine (S93). K178 is covalently cross-linked (Glycyl lysine isopeptide (Lys-Gly) (interchain with G-Cter in SUMO2)). S191 is modified (phosphoserine). Residues 195 to 264 (APVDHLHLPP…PHKLQGSGPL (70 aa)) form a disordered region. 2 stretches are compositionally biased toward low complexity: residues 208-220 (SSHG…SLSP) and 234-255 (SPSR…LTAP). Positions 294–357 (ALKKIRRKIK…RTLLQQLQKL (64 aa)) constitute a bZIP domain. A basic motif region spans residues 296–325 (KKIRRKIKNKISAQESRRKKKEYMDSLEKK). The leucine-zipper stretch occupies residues 336–357 (LRKKVEVLENTNRTLLQQLQKL). Residues 379–399 (CLMVVVLCFAVAFGSFFQGYG) traverse the membrane as a helical; Signal-anchor for type II membrane protein segment. Over 400 to 520 (PYPSATKMAL…ELDRRVNTTF (121 aa)) the chain is Lumenal. The S1P recognition signature appears at 427–430 (RNLL). 3 N-linked (GlcNAc...) asparagine glycosylation sites follow: N480, N504, and N517.

It belongs to the bZIP family. ATF subfamily. Binds DNA as a dimer. In terms of processing, upon ER stress, translocated to the Golgi apparatus, where it is processed by regulated intramembrane proteolysis (RIP) to release the cytosol-facing N-terminal transcription factor domain. The cleavage is performed sequentially by site-1 and site-2 proteases (S1P/MBTPS1 and S2P/MBTPS2). N-glycosylated. Post-translationally, ubiquitinated by HRD1/SYVN1; undergoes 'Lys-48'-linked ubiquitination, followed by rapid proteasomal degradation under normal conditions. Upon ER stress, SYVN1 E3 ubiquitin-protein ligase dissociates from its substrate, ubiquitination does not occur and CREB3L2 is stabilized.

The protein resides in the endoplasmic reticulum membrane. It localises to the nucleus. Transcription factor involved in unfolded protein response (UPR). In the absence of endoplasmic reticulum (ER) stress, inserted into ER membranes, with N-terminal DNA-binding and transcription activation domains oriented toward the cytosolic face of the membrane. In response to ER stress, transported to the Golgi, where it is cleaved in a site-specific manner by resident proteases S1P/MBTPS1 and S2P/MBTPS2. The released N-terminal cytosolic domain is translocated to the nucleus to effect transcription of specific target genes. Plays a critical role in chondrogenesis by activating the transcription of SEC23A, which promotes the transport and secretion of cartilage matrix proteins, and possibly that of ER biogenesis-related genes. In a neuroblastoma cell line, protects cells from ER stress-induced death. In vitro activates transcription of target genes via direct binding to the CRE site. The chain is Cyclic AMP-responsive element-binding protein 3-like protein 2 (CREB3L2) from Pongo abelii (Sumatran orangutan).